The sequence spans 182 residues: Lipoprotein signal peptidase (182 aa).

4 consecutive transmembrane segments (helical) span residues 12-32 (FLWI…TVID), 40-60 (IQVL…AFSF), 70-90 (WFFT…LKQS), and 97-117 (LPVA…DRLV). Catalysis depends on residues aspartate 123 and aspartate 141. Residues 136–156 (AFNIADSAIFIGAALLIIDMF) traverse the membrane as a helical segment. Residues 161–182 (KKSEENGAESKAGSANSSETIK) are disordered. The segment covering 173–182 (GSANSSETIK) has biased composition (polar residues).

It belongs to the peptidase A8 family.

It is found in the cell inner membrane. The enzyme catalyses Release of signal peptides from bacterial membrane prolipoproteins. Hydrolyzes -Xaa-Yaa-Zaa-|-(S,diacylglyceryl)Cys-, in which Xaa is hydrophobic (preferably Leu), and Yaa (Ala or Ser) and Zaa (Gly or Ala) have small, neutral side chains.. It participates in protein modification; lipoprotein biosynthesis (signal peptide cleavage). Functionally, this protein specifically catalyzes the removal of signal peptides from prolipoproteins. This Alteromonas mediterranea (strain DSM 17117 / CIP 110805 / LMG 28347 / Deep ecotype) protein is Lipoprotein signal peptidase.